Here is a 190-residue protein sequence, read N- to C-terminus: Vascular endothelial growth factor A (190 aa).

An N-terminal signal peptide occupies residues 1-26; the sequence is MNFLLSWVHWSLALLLYLHHAKWSQA. Intrachain disulfides connect C51–C93, C82–C127, and C86–C129. N100 carries N-linked (GlcNAc...) asparagine glycosylation.

Belongs to the PDGF/VEGF growth factor family. In terms of assembly, homodimer; disulfide-linked. Also found as heterodimer with PGF. Interacts with NRP1. Interacts with BSG. Interacts with CD82; this interaction inhibits VEGFA-mediated signaling pathway.

Its subcellular location is the secreted. Its function is as follows. Growth factor active in angiogenesis, vasculogenesis and endothelial cell growth. Induces endothelial cell proliferation, promotes cell migration, inhibits apoptosis and induces permeabilization of blood vessels. Binds to the FLT1/VEGFR1 and KDR/VEGFR2 receptors, heparan sulfate and heparin. Binding to NRP1 receptor initiates a signaling pathway needed for motor neuron axon guidance and cell body migration, including for the caudal migration of facial motor neurons from rhombomere 4 to rhombomere 6 during embryonic development. Also binds the DEAR/FBXW7-AS1 receptor. This Sus scrofa (Pig) protein is Vascular endothelial growth factor A (VEGFA).